A 264-amino-acid chain; its full sequence is Tryptophan synthase alpha chain (264 aa).

Residues Glu-49 and Asp-60 each act as proton acceptor in the active site.

This sequence belongs to the TrpA family. In terms of assembly, tetramer of two alpha and two beta chains.

It carries out the reaction (1S,2R)-1-C-(indol-3-yl)glycerol 3-phosphate + L-serine = D-glyceraldehyde 3-phosphate + L-tryptophan + H2O. The protein operates within amino-acid biosynthesis; L-tryptophan biosynthesis; L-tryptophan from chorismate: step 5/5. Its function is as follows. The alpha subunit is responsible for the aldol cleavage of indoleglycerol phosphate to indole and glyceraldehyde 3-phosphate. The polypeptide is Tryptophan synthase alpha chain (Lachnospira eligens (strain ATCC 27750 / DSM 3376 / VPI C15-48 / C15-B4) (Eubacterium eligens)).